We begin with the raw amino-acid sequence, 396 residues long: Sialyltransferase-like protein 2 (396 aa).

Residues 1–6 (MKRRHL) are Cytoplasmic-facing. The chain crosses the membrane as a helical; Signal-anchor for type II membrane protein span at residues 7 to 23 (PPVLVLLLLSILSLSFR). The Lumenal portion of the chain corresponds to 24–396 (RRLLVLQGPP…FTVPPVRLHR (373 aa)). N-linked (GlcNAc...) asparagine glycans are attached at residues asparagine 72, asparagine 260, and asparagine 304.

Belongs to the glycosyltransferase 29 family.

The protein resides in the golgi apparatus membrane. Does not possess sialyltransferase-like activity in vitro. The polypeptide is Sialyltransferase-like protein 2 (Oryza sativa subsp. indica (Rice)).